Consider the following 108-residue polypeptide: Parvalbumin beta (108 aa).

EF-hand domains are found at residues lysine 38 to threonine 73 and leucine 77 to alanine 108. 11 residues coordinate Ca(2+): aspartate 51, aspartate 53, serine 55, phenylalanine 57, glutamate 59, glutamate 62, aspartate 90, aspartate 92, aspartate 94, lysine 96, and glutamate 101.

This sequence belongs to the parvalbumin family.

In terms of biological role, in muscle, parvalbumin is thought to be involved in relaxation after contraction. It binds two calcium ions. This Graptemys geographica (Common map turtle) protein is Parvalbumin beta.